We begin with the raw amino-acid sequence, 930 residues long: MATNFLTQIFGSRNDRLLKQYRKTVERINALEPEFEKLSDDGLRAKTQEFKDRIAKGETLDDLLPEAFATVREGSKRVMKMRHFDVQLLGGMALHNGKIAEMRTGEGKTLTATLPVYLNALSGKGVHVVTVNDYLANRDAQWMGRLYNFLGLTVGINLPQMPREEKQQAYGSDITYGTNNEYGFDYLRDNMVYEPGDRVQRMLNYAIVDEVDSILIDEARTPLIISGQAEDHTDLYLAINKVVPLLTKQEGEADPRTGEGVTVPGDFTVDEKTHQVFLTEDGHEKAEQLLGEFKLLPEGASLYDPANITLMHHLNAALRARHLYHRDQHYVVQQGEVVIVDEFTGRLMTGRRWSDGLHQAVEAKEGVQIQAENQTLASITFQNYFRLYGKLAGMTGTADTEAYEFQEIYGLETVIIPPNRLSKRDDQLDRVYKTTREKYEAAIQDIRECYERGQPVLVGTSSIENSEIIDGLLTQAGLPHQVLNAKQHAREADIVAQAGRTKMITIATNMAGRGTDIVLGGNIEKMIEAIENDEGRDEATKAADIAHVRDEWTRDHEFVKSLGGLRIIATERHESRRIDNQLRGRSGRQGDPGSSRFYLSLDDPLMRIFAGDRVKAIMDRLKMPDGEAIEAGIVTRSIESAQRKVEARNFDIRKQLLEYDDVSNDQRKVIYQQRNDILDAADLSAQIAALREGCFTDLVRQYVPAESVEEQWDLQGLEKTLSNEWGIDMPLKQQVEAAEAVSDEDIVDMVVKAANDSFDAKVALIGQENFTQFERMVLLQSIDTHWREHLASLDYLRQGIHLRGYAQKQPKQEYKREAFELFGQLLDSVKNEVTRQLMTVRVQSGEQLEEAADALESRGENVSNITYSAPTETGEVEVRLDEENQRRIAAAGLGLGTLGAEAAAFARVGRNDPCPCGSGKKYKHCHGKLS.

ATP is bound by residues Q87, G105 to T109, and D516. Residues C914, C916, C925, and H926 each contribute to the Zn(2+) site.

This sequence belongs to the SecA family. As to quaternary structure, monomer and homodimer. Part of the essential Sec protein translocation apparatus which comprises SecA, SecYEG and auxiliary proteins SecDF-YajC and YidC. It depends on Zn(2+) as a cofactor.

Its subcellular location is the cell inner membrane. The protein localises to the cytoplasm. It carries out the reaction ATP + H2O + cellular proteinSide 1 = ADP + phosphate + cellular proteinSide 2.. Functionally, part of the Sec protein translocase complex. Interacts with the SecYEG preprotein conducting channel. Has a central role in coupling the hydrolysis of ATP to the transfer of proteins into and across the cell membrane, serving both as a receptor for the preprotein-SecB complex and as an ATP-driven molecular motor driving the stepwise translocation of polypeptide chains across the membrane. This Variovorax paradoxus (strain S110) protein is Protein translocase subunit SecA.